A 97-amino-acid polypeptide reads, in one-letter code: Putative mitochondrial import inner membrane translocase subunit Tim8 A-B (97 aa).

A Twin CX3C motif motif is present at residues 43–66 (CWEKCMDKPGPRLDGRAELCLVNC). 2 disulfides stabilise this stretch: Cys-43-Cys-66 and Cys-47-Cys-62.

This sequence belongs to the small Tim family. Heterohexamer; possibly composed of 3 copies of TIMM8AB and 3 copies of TIMM13.

Its subcellular location is the mitochondrion inner membrane. Functionally, putative mitochondrial intermembrane chaperone that participates in the import and insertion of some multi-pass transmembrane proteins into the mitochondrial inner membrane. Also required for the transfer of beta-barrel precursors from the TOM complex to the sorting and assembly machinery (SAM complex) of the outer membrane. Acts as a chaperone-like protein that protects the hydrophobic precursors from aggregation and guide them through the mitochondrial intermembrane space. The protein is Putative mitochondrial import inner membrane translocase subunit Tim8 A-B (Timm8a2) of Mus musculus (Mouse).